Consider the following 314-residue polypeptide: D-alanine--D-alanine ligase (314 aa).

Residues 112–307 (KQVWQSLGLP…FQQLVLSILD (196 aa)) form the ATP-grasp domain. 138-193 (AQMLGFPLIVKPAHEGSSIGMAKVGDVAELIAAWRAASAYDAQVLVEQWIQGPEFT) lines the ATP pocket. Residues D261, E274, and N276 each coordinate Mg(2+).

This sequence belongs to the D-alanine--D-alanine ligase family. The cofactor is Mg(2+). Mn(2+) serves as cofactor.

The protein localises to the cytoplasm. It catalyses the reaction 2 D-alanine + ATP = D-alanyl-D-alanine + ADP + phosphate + H(+). It functions in the pathway cell wall biogenesis; peptidoglycan biosynthesis. Its function is as follows. Cell wall formation. The protein is D-alanine--D-alanine ligase of Stutzerimonas stutzeri (strain A1501) (Pseudomonas stutzeri).